The chain runs to 274 residues: Large ribosomal subunit protein uL2c (274 aa).

Residues His230 to Lys252 form a disordered region.

The protein belongs to the universal ribosomal protein uL2 family. In terms of assembly, part of the 50S ribosomal subunit.

Its subcellular location is the plastid. This is Large ribosomal subunit protein uL2c (rpl2) from Euglena longa (Euglenophycean alga).